The primary structure comprises 442 residues: 23S rRNA (uracil(1939)-C(5))-methyltransferase RlmD (442 aa).

The region spanning 10 to 75 (AKQTAKNCCK…RQYGRAKANK (66 aa)) is the TRAM domain. [4Fe-4S] cluster contacts are provided by Cys88, Cys94, Cys97, and Cys173. S-adenosyl-L-methionine contacts are provided by Gln276, Phe305, Asn310, Glu326, Asn353, and Asp374. Residue Cys400 is the Nucleophile of the active site.

The protein belongs to the class I-like SAM-binding methyltransferase superfamily. RNA M5U methyltransferase family. RlmD subfamily.

The catalysed reaction is uridine(1939) in 23S rRNA + S-adenosyl-L-methionine = 5-methyluridine(1939) in 23S rRNA + S-adenosyl-L-homocysteine + H(+). Its function is as follows. Catalyzes the formation of 5-methyl-uridine at position 1939 (m5U1939) in 23S rRNA. In Haemophilus ducreyi (strain 35000HP / ATCC 700724), this protein is 23S rRNA (uracil(1939)-C(5))-methyltransferase RlmD.